A 179-amino-acid chain; its full sequence is Large ribosomal subunit protein uL5 (179 aa).

This sequence belongs to the universal ribosomal protein uL5 family. Part of the 50S ribosomal subunit; part of the 5S rRNA/L5/L18/L25 subcomplex. Contacts the 5S rRNA and the P site tRNA. Forms a bridge to the 30S subunit in the 70S ribosome.

This is one of the proteins that bind and probably mediate the attachment of the 5S RNA into the large ribosomal subunit, where it forms part of the central protuberance. In the 70S ribosome it contacts protein S13 of the 30S subunit (bridge B1b), connecting the 2 subunits; this bridge is implicated in subunit movement. Contacts the P site tRNA; the 5S rRNA and some of its associated proteins might help stabilize positioning of ribosome-bound tRNAs. The chain is Large ribosomal subunit protein uL5 from Solidesulfovibrio magneticus (strain ATCC 700980 / DSM 13731 / RS-1) (Desulfovibrio magneticus).